Here is a 142-residue protein sequence, read N- to C-terminus: Galactose-6-phosphate isomerase subunit LacA (142 aa).

The protein belongs to the LacAB/RpiB family. Heteromultimeric protein consisting of LacA and LacB.

The catalysed reaction is aldehydo-D-galactose 6-phosphate = keto-D-tagatose 6-phosphate. It functions in the pathway carbohydrate metabolism; D-galactose 6-phosphate degradation; D-tagatose 6-phosphate from D-galactose 6-phosphate: step 1/1. This is Galactose-6-phosphate isomerase subunit LacA from Staphylococcus aureus (strain JH9).